The primary structure comprises 538 residues: Chaperonin GroEL (538 aa).

ATP-binding positions include 29 to 32, 86 to 90, Gly413, 476 to 478, and Asp492; these read TIGP, DGTTT, and NAA.

The protein belongs to the chaperonin (HSP60) family. In terms of assembly, forms a cylinder of 14 subunits composed of two heptameric rings stacked back-to-back. Interacts with the co-chaperonin GroES.

The protein resides in the cytoplasm. It carries out the reaction ATP + H2O + a folded polypeptide = ADP + phosphate + an unfolded polypeptide.. Functionally, together with its co-chaperonin GroES, plays an essential role in assisting protein folding. The GroEL-GroES system forms a nano-cage that allows encapsulation of the non-native substrate proteins and provides a physical environment optimized to promote and accelerate protein folding. In Staphylococcus aureus (strain NCTC 8325 / PS 47), this protein is Chaperonin GroEL.